Here is a 274-residue protein sequence, read N- to C-terminus: Probable glycerophosphodiester phosphodiesterase 1 (274 aa).

The GP-PDE domain occupies 12–264 (PFVVAHRGAS…HHPGRTKAWL (253 aa)). Histidine 17 functions as the Proton acceptor in the catalytic mechanism. Ca(2+) is bound by residues glutamate 44 and aspartate 46. Histidine 59 acts as the Proton donor in catalysis. Glutamate 126 provides a ligand contact to Ca(2+).

Belongs to the glycerophosphoryl diester phosphodiesterase family. Ca(2+) serves as cofactor.

It carries out the reaction a sn-glycero-3-phosphodiester + H2O = an alcohol + sn-glycerol 3-phosphate + H(+). In terms of biological role, glycerophosphodiester phosphodiesterase hydrolyzes glycerophosphodiesters into glycerol-3-phosphate (G3P) and the corresponding alcohol. The sequence is that of Probable glycerophosphodiester phosphodiesterase 1 (glpQ1) from Mycobacterium tuberculosis (strain CDC 1551 / Oshkosh).